The primary structure comprises 83 residues: MKASMFLALAGLVLLFVVGYASESEEKEFPRELLSKIFAVDDFKGEERGCKGFGDSCTPGKNECCPNYACSGKHKWCKVYLGK.

The signal sequence occupies residues 1–21 (MKASMFLALAGLVLLFVVGYA). A propeptide spanning residues 22–48 (SESEEKEFPRELLSKIFAVDDFKGEER) is cleaved from the precursor. Intrachain disulfides connect C50–C65, C57–C70, and C64–C77. L81 carries the post-translational modification Leucine amide.

Belongs to the neurotoxin 10 (Hwtx-1) family. 15 (Hntx-3) subfamily. Monomer. In terms of tissue distribution, expressed by the venom gland.

Its subcellular location is the secreted. Its function is as follows. Lethal neurotoxin. Selectively blocks tetrodotoxin-sensitive voltage-gated sodium channels (Nav). Does not affect tetrodotoxin-resistant voltage-gated sodium channels or calcium channels. The chain is Mu-theraphotoxin-Hhn2e from Cyriopagopus hainanus (Chinese bird spider).